The following is a 493-amino-acid chain: Glutamyl-tRNA(Gln) amidotransferase subunit A (493 aa).

Catalysis depends on charge relay system residues Lys78 and Ser158. Ser182 functions as the Acyl-ester intermediate in the catalytic mechanism.

The protein belongs to the amidase family. GatA subfamily. As to quaternary structure, heterotrimer of A, B and C subunits.

The enzyme catalyses L-glutamyl-tRNA(Gln) + L-glutamine + ATP + H2O = L-glutaminyl-tRNA(Gln) + L-glutamate + ADP + phosphate + H(+). Its function is as follows. Allows the formation of correctly charged Gln-tRNA(Gln) through the transamidation of misacylated Glu-tRNA(Gln) in organisms which lack glutaminyl-tRNA synthetase. The reaction takes place in the presence of glutamine and ATP through an activated gamma-phospho-Glu-tRNA(Gln). The chain is Glutamyl-tRNA(Gln) amidotransferase subunit A from Methylorubrum extorquens (strain PA1) (Methylobacterium extorquens).